We begin with the raw amino-acid sequence, 488 residues long: uncharacterized protein (488 aa).

Its subcellular location is the cytoplasm. The protein resides in the nucleus. This is an uncharacterized protein from Schizosaccharomyces pombe (strain 972 / ATCC 24843) (Fission yeast).